Consider the following 1001-residue polypeptide: MIFPVARYALRWLRRPEDRAFSRAAMEMALRGVRKVLCVAEKNDAAKGIADLLSNGRMRRREGLSKFNKIYEFDYHLYGQNVTMVMTSVSGHLLAHDFQMQFRKWQSCNPLVLFEAEIEKYCPENFVDIKKTLERETRQCQALVIWTDCDREGENIGFEIIHVCKAVKPNLQVLRARFSEITPHAVRTACENLTEPDQRVSDAVDVRQELDLRIGAAFTRFQTLRLQRIFPEVLAEQLISYGSCQFPTLGFVVERFKAIQAFVPEIFHRIKVTHDHKDGIVEFNWKRHRLFNHTACLVLYQLCVEDPMATVVEVRSKPKSKWRPQALDTVELEKLASRKLRINAKETMRIAEKLYTQGYISYPRTETNIFPRDLNLTVLVEQQTPDPRWGAFAQSILERGGPTPRNGNKSDQAHPPIHPTKYTNNLQGDEQRLYEFIVRHFLACCSQDAQGQETTVEIDIAQERFVAHGLMILARNYLDVYPYDHWSDKILPVYEQGSHFQPSTVEMVDGETSPPKLLTEADLIALMEKHGIGTDATHAEHIETIKARMYVGLTPDKRFLPGHLGMGLVEGYDSMGYEMSKPDLRAELEADLKLICDGKKDKFVVLRQQVQKYKQVFIEAVAKAKKLDEALAQYFGNGTELAQQEDIYPAMPEPIRKCPQCNKDMVLKTKKNGGFYLSCMGFPECRSAVWLPDSVLEASRDSSVCPVCQPHPVYRLKLKFKRGSLPPTMPLEFVCCIGGCDDTLREILDLRFSGGPPRASQPSGRLQANQSLNRMDNSQHPQPADSRQTGSSKALAQTLPPPTAAGESNSVTCNCGQEAVLLTVRKEGPNRGRQFFKCNGGSCNFFLWADSPNPGAGGPPALAYRPLGASLGCPPGPGIHLGGFGNPGDGSGSGTSCLCSQPSVTRTVQKDGPNKGRQFHTCAKPREQQCGFFQWVDENTAPGTSGAPSWTGDRGRTLESEARSKRPRASSSDMGSTAKKPRKCSLCHQPGHTRPFCPQNR.

A Toprim domain is found at 35–179 (KVLCVAEKND…NLQVLRARFS (145 aa)). The Topo IA-type catalytic domain occupies 197-617 (DQRVSDAVDV…QQVQKYKQVF (421 aa)). The active-site O-(5'-phospho-DNA)-tyrosine intermediate is the Y362. Positions 400 to 424 (GGPTPRNGNKSDQAHPPIHPTKYTN) are disordered. The segment at 658-685 (CPQCNKDMVLKTKKNGGFYLSCMGFPEC) adopts a C4-type zinc-finger fold. The span at 774–792 (RMDNSQHPQPADSRQTGSS) shows a compositional bias: polar residues. The tract at residues 774–810 (RMDNSQHPQPADSRQTGSSKALAQTLPPPTAAGESNS) is disordered. Residues C813, C815, C838, C843, C897, C899, C922, and C930 each coordinate Zn(2+). GRF-type zinc fingers lie at residues 813-852 (CNCG…ADSP) and 897-939 (CLCS…VDEN). The tract at residues 937–1001 (DENTAPGTSG…HTRPFCPQNR (65 aa)) is disordered. The segment covering 953 to 964 (DRGRTLESEARS) has biased composition (basic and acidic residues).

Belongs to the type IA topoisomerase family. As to quaternary structure, binds ssDNA. Interacts (via N-terminal region) with BLM; the interaction is direct. Directly interacts with RMI1. Component of the RMI complex, containing at least TOP3A, RMI1 and RMI2. The RMI complex interacts with BLM. The cofactor is Mg(2+). In terms of tissue distribution, high expression is found in testis, heart, skeletal muscle and pancreas.

It localises to the mitochondrion matrix. It catalyses the reaction ATP-independent breakage of single-stranded DNA, followed by passage and rejoining.. Functionally, releases the supercoiling and torsional tension of DNA introduced during the DNA replication and transcription by transiently cleaving and rejoining one strand of the DNA duplex. Introduces a single-strand break via transesterification at a target site in duplex DNA. The scissile phosphodiester is attacked by the catalytic tyrosine of the enzyme, resulting in the formation of a DNA-(5'-phosphotyrosyl)-enzyme intermediate and the expulsion of a 3'-OH DNA strand. The free DNA strand then undergoes passage around the unbroken strand thus removing DNA supercoils. Finally, in the religation step, the DNA 3'-OH attacks the covalent intermediate to expel the active-site tyrosine and restore the DNA phosphodiester backbone. As an essential component of the RMI complex it is involved in chromosome separation and the processing of homologous recombination intermediates to limit DNA crossover formation in cells. Has DNA decatenation activity. It is required for mtDNA decatenation and segregation after completion of replication, in a process that does not require BLM, RMI1 and RMI2. This chain is DNA topoisomerase 3-alpha (TOP3A), found in Homo sapiens (Human).